A 1213-amino-acid chain; its full sequence is DNA-directed RNA polymerase subunit beta' (1213 aa).

Cys-60, Cys-62, Cys-75, and Cys-78 together coordinate Zn(2+). Mg(2+) contacts are provided by Asp-450, Asp-452, and Asp-454. Residues Cys-819, Cys-893, Cys-900, and Cys-903 each contribute to the Zn(2+) site.

The protein belongs to the RNA polymerase beta' chain family. In terms of assembly, the RNAP catalytic core consists of 2 alpha, 1 beta, 1 beta' and 1 omega subunit. When a sigma factor is associated with the core the holoenzyme is formed, which can initiate transcription. Mg(2+) serves as cofactor. Requires Zn(2+) as cofactor.

The enzyme catalyses RNA(n) + a ribonucleoside 5'-triphosphate = RNA(n+1) + diphosphate. Functionally, DNA-dependent RNA polymerase catalyzes the transcription of DNA into RNA using the four ribonucleoside triphosphates as substrates. The protein is DNA-directed RNA polymerase subunit beta' of Streptococcus pyogenes serotype M2 (strain MGAS10270).